A 200-amino-acid polypeptide reads, in one-letter code: dITP/XTP pyrophosphatase (200 aa).

7 to 12 (SNNRGK) contributes to the substrate binding site. Asp68 serves as the catalytic Proton acceptor. Asp68 provides a ligand contact to Mg(2+). Substrate is bound by residues Ala69, 154-157 (FGFD), Lys177, and 182-183 (HR).

It belongs to the HAM1 NTPase family. In terms of assembly, homodimer. The cofactor is Mg(2+).

The catalysed reaction is XTP + H2O = XMP + diphosphate + H(+). It carries out the reaction dITP + H2O = dIMP + diphosphate + H(+). It catalyses the reaction ITP + H2O = IMP + diphosphate + H(+). Its function is as follows. Pyrophosphatase that catalyzes the hydrolysis of nucleoside triphosphates to their monophosphate derivatives, with a high preference for the non-canonical purine nucleotides XTP (xanthosine triphosphate), dITP (deoxyinosine triphosphate) and ITP. Seems to function as a house-cleaning enzyme that removes non-canonical purine nucleotides from the nucleotide pool, thus preventing their incorporation into DNA/RNA and avoiding chromosomal lesions. This is dITP/XTP pyrophosphatase from Delftia acidovorans (strain DSM 14801 / SPH-1).